We begin with the raw amino-acid sequence, 463 residues long: MSLIVTRFAPSPTGYLHIGGLRTAIFNYLFARANQGKFFLRIEDTDLSRNSIEAANAIIEAFKWVGLEYDGEILYQSKRFEIYKEYIQKLLDEDKAYYCYMSKEELDALREEQKARKETPRYDNRYRDFKGTPPKGIEPVVRIKVPQNEVIGFNDGVKGEVKVNTNELDDFIIARSDGTPTYNFVVTIDDALMGITDVIRGDDHLSNTPKQIVLYKALNFKIPNFFHVPMILNEEGQKLSKRHGATNVMDYQEMGYLKEALVNFLARLGWSYQDKEVFSMQELLELFDPKDLNSSPSCFSWHKLNWLNAHYLKNQSVQELLKLLKPFSFSDLSHLNPTQLDRLLDALKERSQTLKELALKIDEVLIAPVEYEEKVFKKLNQALVMPLLEKFKLELNKANFNDESALENAMRQIIEEEKIKAGSFMQPLRLALLGKGGGIGLKEALFILGKTESVKRIEDFLKN.

The 'HIGH' region motif lies at 10–20 (PSPTGYLHIGG). A 'KMSKS' region motif is present at residues 238 to 242 (KLSKR). Position 241 (Lys241) interacts with ATP.

It belongs to the class-I aminoacyl-tRNA synthetase family. Glutamate--tRNA ligase type 1 subfamily. Monomer.

It localises to the cytoplasm. It catalyses the reaction tRNA(Glu) + L-glutamate + ATP = L-glutamyl-tRNA(Glu) + AMP + diphosphate. Catalyzes the attachment of glutamate to tRNA(Glu) in a two-step reaction: glutamate is first activated by ATP to form Glu-AMP and then transferred to the acceptor end of tRNA(Glu). This is Glutamate--tRNA ligase 1 from Helicobacter pylori (strain ATCC 700392 / 26695) (Campylobacter pylori).